Here is a 582-residue protein sequence, read N- to C-terminus: Trans-activating transcriptional regulatory protein (582 aa).

Residues 101-131 are disordered; it reads QPVVEQPSPSSAYHAESFEHSAGVNQPSATG.

The protein belongs to the nucleopolyhedrovirus IE-1 protein family. As to quaternary structure, homodimer. Interacts with helicase and LEF-3. Phosphorylated.

Its subcellular location is the host nucleus. In terms of biological role, regulatory transcriptional protein, which trans-activates gene expression from early baculovirus promoters. Can also trans-activate its own promoter, suggesting an autoregulation during infection of host cells. Also promotes viral DNA genome replication via the N-terminal region. This is Trans-activating transcriptional regulatory protein (IE1) from Autographa californica nuclear polyhedrosis virus (AcMNPV).